The primary structure comprises 256 residues: 5-keto-4-deoxy-D-glucarate aldolase (256 aa).

The active-site Proton acceptor is histidine 50. Glutamine 151 serves as a coordination point for substrate. Residue glutamate 153 participates in Mg(2+) binding. The substrate site is built by serine 178 and aspartate 179. Mg(2+) is bound at residue aspartate 179.

It belongs to the HpcH/HpaI aldolase family. KDGluc aldolase subfamily. As to quaternary structure, homohexamer; trimer of dimers. Requires Mg(2+) as cofactor.

It catalyses the reaction 5-dehydro-4-deoxy-D-glucarate = 2-hydroxy-3-oxopropanoate + pyruvate. It carries out the reaction 2-dehydro-3-deoxy-D-glucarate = 2-hydroxy-3-oxopropanoate + pyruvate. Its pathway is carbohydrate acid metabolism; galactarate degradation; D-glycerate from galactarate: step 2/3. Its function is as follows. Catalyzes the reversible retro-aldol cleavage of both 5-keto-4-deoxy-D-glucarate and 2-keto-3-deoxy-D-glucarate to pyruvate and tartronic semialdehyde. This chain is 5-keto-4-deoxy-D-glucarate aldolase, found in Enterobacter sp. (strain 638).